The following is a 592-amino-acid chain: Transcription factor MYC3 (592 aa).

A JAZ-interaction domain region spans residues 82-141 (STGDNTVILGWGDGYYKGEEDKEKKKNNTNTAEQEHRKRVIRELNSLISGGIGVSDESND). 4 disordered regions span residues 261–313 (ENDP…VENQ), 341–361 (CGNE…NDEG), 393–422 (EPPE…AERQ), and 465–508 (QQAE…STAS). Low complexity predominate over residues 278–293 (SPARVNNGNNSNSNSK). Positions 294-306 (SDSHQISKLEKND) are enriched in basic and acidic residues. Positions 352-361 (VSKGSNNDEG) are enriched in polar residues. Residues 398–407 (KPRKRGRKPA) are compositionally biased toward basic residues. Composition is skewed to basic and acidic residues over residues 408–422 (NGRE…AERQ) and 468–482 (ESDK…DGMS). A bHLH domain is found at 411-460 (EEPLNHVEAERQRREKLNQRFYSLRAVVPNVSKMDKASLLGDAISYINEL).

Homo- and heterodimer. Interacts with MYB28, MYB29, MYB34, MYB51, MYB76, MYB122, MYC2, MYC4, AFPH2/NINJA and the JAZ repressors TIFY10A/JAZ1, TIFY10B/JAZ2, TIFY6B/JAZ3, TIFY11A/JAZ5, TIFY11B/JAZ6, TIFY5B/JAZ7, TIFY5A/JAZ8, TIFY7/JAZ9, TIFY9/JAZ10, TIFY3A/JAZ11 and TIFY3B/JAZ12. Constitutively expressed in roots, stems, leaves, flowers, and seedlings.

The protein resides in the nucleus. Functionally, transcription factor involved in tryptophan, jasmonic acid (JA) and other stress-responsive gene regulation. With MYC2 and MYC4, controls additively subsets of JA-dependent responses. Can form complexes with all known glucosinolate-related MYBs to regulate glucosinolate biosynthesis. Binds to the G-box (5'-CACGTG-3') of promoters. Activates multiple TIFY/JAZ promoters. The protein is Transcription factor MYC3 (MYC3) of Arabidopsis thaliana (Mouse-ear cress).